Reading from the N-terminus, the 282-residue chain is 4-hydroxy-3-methylbut-2-enyl diphosphate reductase (282 aa).

Residue cysteine 14 participates in [4Fe-4S] cluster binding. (2E)-4-hydroxy-3-methylbut-2-enyl diphosphate contacts are provided by histidine 43 and histidine 78. The dimethylallyl diphosphate site is built by histidine 43 and histidine 78. Residues histidine 43 and histidine 78 each contribute to the isopentenyl diphosphate site. Cysteine 100 lines the [4Fe-4S] cluster pocket. Position 128 (histidine 128) interacts with (2E)-4-hydroxy-3-methylbut-2-enyl diphosphate. Histidine 128 provides a ligand contact to dimethylallyl diphosphate. An isopentenyl diphosphate-binding site is contributed by histidine 128. Glutamate 130 acts as the Proton donor in catalysis. Residue threonine 164 participates in (2E)-4-hydroxy-3-methylbut-2-enyl diphosphate binding. Cysteine 192 provides a ligand contact to [4Fe-4S] cluster. Positions 220, 221, 222, and 266 each coordinate (2E)-4-hydroxy-3-methylbut-2-enyl diphosphate. The dimethylallyl diphosphate site is built by serine 220, serine 221, asparagine 222, and serine 266. Isopentenyl diphosphate is bound by residues serine 220, serine 221, asparagine 222, and serine 266.

It belongs to the IspH family. [4Fe-4S] cluster serves as cofactor.

The catalysed reaction is isopentenyl diphosphate + 2 oxidized [2Fe-2S]-[ferredoxin] + H2O = (2E)-4-hydroxy-3-methylbut-2-enyl diphosphate + 2 reduced [2Fe-2S]-[ferredoxin] + 2 H(+). The enzyme catalyses dimethylallyl diphosphate + 2 oxidized [2Fe-2S]-[ferredoxin] + H2O = (2E)-4-hydroxy-3-methylbut-2-enyl diphosphate + 2 reduced [2Fe-2S]-[ferredoxin] + 2 H(+). It participates in isoprenoid biosynthesis; dimethylallyl diphosphate biosynthesis; dimethylallyl diphosphate from (2E)-4-hydroxy-3-methylbutenyl diphosphate: step 1/1. It functions in the pathway isoprenoid biosynthesis; isopentenyl diphosphate biosynthesis via DXP pathway; isopentenyl diphosphate from 1-deoxy-D-xylulose 5-phosphate: step 6/6. Its function is as follows. Catalyzes the conversion of 1-hydroxy-2-methyl-2-(E)-butenyl 4-diphosphate (HMBPP) into a mixture of isopentenyl diphosphate (IPP) and dimethylallyl diphosphate (DMAPP). Acts in the terminal step of the DOXP/MEP pathway for isoprenoid precursor biosynthesis. In Clostridium perfringens (strain 13 / Type A), this protein is 4-hydroxy-3-methylbut-2-enyl diphosphate reductase.